A 213-amino-acid polypeptide reads, in one-letter code: Adenylate kinase (213 aa).

14–19 (GSGKGT) contacts ATP. The interval 34–63 (SSGELFRSAIDSASPLGIKAAEYINQGLLV) is NMP. AMP-binding positions include Ser-35, Arg-40, 61-63 (LLV), 89-92 (GFPR), and Gln-96. An LID region spans residues 129-162 (SRFICPSCKHVYNQNQGLSECPTCQMKLVRRSDD). An ATP-binding site is contributed by Arg-130. Residues Cys-133 and Cys-136 each contribute to the Zn(2+) site. 139–140 (VY) provides a ligand contact to ATP. Zn(2+)-binding residues include Cys-149 and Cys-152. 2 residues coordinate AMP: Arg-159 and Arg-170. Residue Ala-198 coordinates ATP.

It belongs to the adenylate kinase family. As to quaternary structure, monomer.

The protein localises to the cytoplasm. It carries out the reaction AMP + ATP = 2 ADP. It participates in purine metabolism; AMP biosynthesis via salvage pathway; AMP from ADP: step 1/1. Its function is as follows. Catalyzes the reversible transfer of the terminal phosphate group between ATP and AMP. Plays an important role in cellular energy homeostasis and in adenine nucleotide metabolism. The protein is Adenylate kinase of Chlamydia abortus (strain DSM 27085 / S26/3) (Chlamydophila abortus).